We begin with the raw amino-acid sequence, 215 residues long: LexA repressor (215 aa).

Residues 28 to 48 (RAEIAAELGFSSPNAAEEHLR) constitute a DNA-binding region (H-T-H motif). Catalysis depends on for autocatalytic cleavage activity residues serine 133 and lysine 170.

Belongs to the peptidase S24 family. Homodimer.

It catalyses the reaction Hydrolysis of Ala-|-Gly bond in repressor LexA.. Represses a number of genes involved in the response to DNA damage (SOS response), including recA and lexA. In the presence of single-stranded DNA, RecA interacts with LexA causing an autocatalytic cleavage which disrupts the DNA-binding part of LexA, leading to derepression of the SOS regulon and eventually DNA repair. In Burkholderia cenocepacia (strain ATCC BAA-245 / DSM 16553 / LMG 16656 / NCTC 13227 / J2315 / CF5610) (Burkholderia cepacia (strain J2315)), this protein is LexA repressor.